The following is a 101-amino-acid chain: Ferredoxin-3 (101 aa).

4Fe-4S ferredoxin-type domains are found at residues 17 to 46 and 70 to 100; these read YLMKIDEQKCIGCGRCFKVCGRDVMSLHGL and KVMALTGAENCIGCGACARVCPSECQTHAAL. 8 residues coordinate [4Fe-4S] cluster: Cys26, Cys29, Cys32, Cys36, Cys80, Cys83, Cys86, and Cys90.

In terms of assembly, homodimer. It depends on [4Fe-4S] cluster as a cofactor.

In terms of biological role, ferredoxins are iron-sulfur proteins that transfer electrons in a wide variety of metabolic reactions. This chain is Ferredoxin-3 (fdxB), found in Rhodobacter capsulatus (Rhodopseudomonas capsulata).